The sequence spans 93 residues: LSM complex subunit LSM5 (93 aa).

Residues 7–87 form the Sm domain; it reads LPLEVIDKTI…IAILVPGGKK (81 aa).

Belongs to the snRNP Sm proteins family. As to quaternary structure, component of the heptameric LSM1-LSM7 complex that forms a seven-membered ring structure with a donut shape. The LSm subunits are arranged in the order LSM1, LSM2, LSM3, LSM6, LSM5, LSM7 and LSM4. Except for LSM1, where a C-terminal helix crosses the ring structure to form additional interactions with LSM3 and LSM6, each subunit interacts only with its two neighboring subunits. The LSM1-LSM7 complex interacts with PAT1; within the complex PAT1 has direct interactions with LSM2 and LSM3. The LSM1-LSM7 complex interacts with XRN1. Component of the heptameric LSM2-LSM8 complex that forms a seven-membered ring structure with a donut shape; an RNA strand can pass through the hole in the center of the ring structure. The LSm subunits are arranged in the order LSM8, LSM2, LSM3, LSM6, LSM5, LSM7 and LSM4. Component of the spliceosome U4/U6-U5 tri-snRNP complex composed of the U4, U6 and U5 snRNAs and at least PRP3, PRP4, PRP6, PRP8, PRP18, PRP31, PRP38, SNU13, SNU23, SNU66, SNU114, SPP381, SMB1, SMD1, SMD2, SMD3, SMX2, SMX3, LSM2, LSM3, LSM4, LSM5, LSM6, LSM7, LSM8, BRR2 and DIB1. May be found in a complex comprising LSM2-LSM7 without LSM1 or LSM8; the complex associates with pre-P RNA and snoRNA SNR5.

Its subcellular location is the nucleus. It is found in the nucleolus. It localises to the cytoplasm. Its function is as follows. Component of LSm protein complexes, which are involved in RNA processing and may function in a chaperone-like manner. Component of the cytoplasmic LSM1-LSM7 complex which is involved in mRNA degradation by activating the decapping step. Together with PAT1, the LSM1-LSM7 complex binds to osmotic stress-activated mRNAs to attenuate the osmotic stress response, probably by limiting ribosome access to the mRNA and consequently translation. Component of the nuclear LSM2-LSM8 complex, which is involved in spliceosome assembly. The LSM2-LSM8 complex plays a role in the biogenesis of the spliceosomal U4/U6-U5 tri-snRNP complex by accelerating PRP24-mediated annealing of U4/U6 di-snRNA. The LSM2-LSM8 complex binds U6 snRNA terminating with a non-cyclic 3' phosphate group. LSM2-LSM8 is probably also involved in degradation of nuclear pre-mRNA by targeting them for decapping. LSM2-LSM8 could be involved in processing of pre-tRNAs, pre-rRNAs and U3 snoRNA, although involvement may be indirect. In a complex that probably contains LSM2-LSM7, but not LSM1 or LSM8, associates with the precursor of the RNA component of RNase P (pre-P RNA) and may be involved in maturing pre-P RNA; the complex also associates with snoRNA SNR5. The sequence is that of LSM complex subunit LSM5 (LSM5) from Saccharomyces cerevisiae (strain ATCC 204508 / S288c) (Baker's yeast).